We begin with the raw amino-acid sequence, 471 residues long: Putative multidrug resistance protein MdtD (471 aa).

The Periplasmic segment spans residues 1–11 (MTDLPDSTRWQ). A helical membrane pass occupies residues 12–32 (LWIVAFGFFMQSLDTTIVNTA). Residues 33-48 (LPSMAQSLGESPLHMH) lie on the Cytoplasmic side of the membrane. The chain crosses the membrane as a helical span at residues 49–69 (MVIVSYVLTVAVMLPASGWLA). At 70–76 (DKVGVRN) the chain is on the periplasmic side. A helical transmembrane segment spans residues 77-97 (IFFTAIVLFTLGSLFCALSGT). The Cytoplasmic segment spans residues 98–101 (LNEL). A helical transmembrane segment spans residues 102–124 (LLARALQGVGGAMMVPVGRLTVM). Residues 125–137 (KIVPREQYMAAMT) lie on the Periplasmic side of the membrane. The helical transmembrane segment at 138–158 (FVTLPGQVGPLLGPALGGLLV) threads the bilayer. Residues 159-164 (EYASWH) lie on the Cytoplasmic side of the membrane. Residues 165–185 (WIFLINIPVGIIGAIATLLLM) form a helical membrane-spanning segment. Topologically, residues 186-196 (PNYTMQTRRFD) are periplasmic. The chain crosses the membrane as a helical span at residues 197 to 217 (LSGFLLLAVGMAVLTLALDGS). The Cytoplasmic portion of the chain corresponds to 218-224 (KGTGLSP). The chain crosses the membrane as a helical span at residues 225–245 (LTIAGLVAVGVVALVLYLLHA). Residues 246-262 (RNNNRALFSLKLFRTRT) lie on the Periplasmic side of the membrane. The chain crosses the membrane as a helical span at residues 263-283 (FSLGLAGSFAGRIGSGMLPFM). The Cytoplasmic portion of the chain corresponds to 284 to 285 (TP). A helical transmembrane segment spans residues 286-306 (VFLQIGLGFSPFHAGLMMIPM). The Periplasmic portion of the chain corresponds to 307-341 (VLGSMGMKRIVVQVVNRFGYRRVLVATTLGLSLVT). The chain crosses the membrane as a helical span at residues 342–362 (LLFMTTALLGWYYVLPFVLFL). The Cytoplasmic segment spans residues 363–395 (QGMVNSTRFSSMNTLTLKDLPDNLASSGNSLLS). Residues 396-416 (MIMQLSMSIGVTIAGLLLGLF) form a helical membrane-spanning segment. Residues 417–430 (GSQHVSVDSGTTQT) lie on the Periplasmic side of the membrane. A helical membrane pass occupies residues 431–451 (VFMYTWLSMALIIALPAFIFA). At 452–471 (RVPNDTHQNVAISRRKRSAQ) the chain is on the cytoplasmic side.

It belongs to the major facilitator superfamily. TCR/Tet family.

The protein localises to the cell inner membrane. In Escherichia coli (strain K12 / MC4100 / BW2952), this protein is Putative multidrug resistance protein MdtD.